The sequence spans 354 residues: Tyrosine recombinase XerH (354 aa).

The 87-residue stretch at 48–134 (LTKGVKNIDE…AVINFFDFLD (87 aa)) folds into the Core-binding (CB) domain. A Tyr recombinase domain is found at 163-346 (KLPEFMSKEE…DNDKLKLAAQ (184 aa)). Active-site residues include R205, K231, H298, R301, and H324. Y333 functions as the O-(3'-phospho-DNA)-tyrosine intermediate in the catalytic mechanism.

Belongs to the 'phage' integrase family. XerH subfamily.

The protein resides in the cytoplasm. Its activity is regulated as follows. FtsK is required for efficient recombination. Its function is as follows. Site-specific tyrosine recombinase, which acts by catalyzing the cutting and rejoining of the recombining DNA molecules. Binds to the complete atypical dif motif (difH) site and to both halves separately. This chain is Tyrosine recombinase XerH, found in Campylobacter jejuni subsp. jejuni serotype O:2 (strain ATCC 700819 / NCTC 11168).